A 76-amino-acid polypeptide reads, in one-letter code: Defensin-like protein 122 (76 aa).

The N-terminal stretch at 1–25 (MSKTTVIAIFMVVLVLGLVTKETQG) is a signal peptide. Intrachain disulfides connect Cys29–Cys74, Cys39–Cys60, Cys44–Cys68, and Cys48–Cys70.

This sequence belongs to the DEFL family. In terms of tissue distribution, expressed in flower buds, but not in stems, roots or rosette leaves.

It is found in the secreted. The polypeptide is Defensin-like protein 122 (LCR30) (Arabidopsis thaliana (Mouse-ear cress)).